The following is a 236-amino-acid chain: Phosphoribosylaminoimidazole-succinocarboxamide synthase (236 aa).

The protein belongs to the SAICAR synthetase family.

It carries out the reaction 5-amino-1-(5-phospho-D-ribosyl)imidazole-4-carboxylate + L-aspartate + ATP = (2S)-2-[5-amino-1-(5-phospho-beta-D-ribosyl)imidazole-4-carboxamido]succinate + ADP + phosphate + 2 H(+). It participates in purine metabolism; IMP biosynthesis via de novo pathway; 5-amino-1-(5-phospho-D-ribosyl)imidazole-4-carboxamide from 5-amino-1-(5-phospho-D-ribosyl)imidazole-4-carboxylate: step 1/2. This is Phosphoribosylaminoimidazole-succinocarboxamide synthase from Hahella chejuensis (strain KCTC 2396).